The primary structure comprises 986 residues: Ephrin type-A receptor 4 (986 aa).

The N-terminal stretch at 1-19 is a signal peptide; that stretch reads MAGIFYFALFSCLFGICDA. Residues 20-547 lie on the Extracellular side of the membrane; the sequence is VTGSRVYPAN…RIIGDGANST (528 aa). In terms of domain architecture, Eph LBD spans 30–209; it reads EVTLLDSRSV…FYKKCPLTVR (180 aa). 3 N-linked (GlcNAc...) asparagine glycosylation sites follow: asparagine 235, asparagine 340, and asparagine 408. 2 Fibronectin type-III domains span residues 328–439 and 440–537; these read PPSA…TNQA and APSS…TVPS. Asparagine 545 carries an N-linked (GlcNAc...) asparagine glycan. The helical transmembrane segment at 548 to 569 threads the bilayer; it reads VLLVSVSGSVVLVVILIAAFVI. Residues 570-986 are Cytoplasmic-facing; it reads SRRRSKYSKA…QQMHGRMVPV (417 aa). Tyrosine 596 and tyrosine 602 each carry phosphotyrosine; by autocatalysis. The Protein kinase domain occupies 621-882; that stretch reads IKIEKVIGVG…QIVNMLDKLI (262 aa). ATP-binding positions include 627-635 and lysine 653; that span reads IGVGEFGEV. Aspartate 746 acts as the Proton acceptor in catalysis. 2 positions are modified to phosphotyrosine; by autocatalysis: tyrosine 779 and tyrosine 928. One can recognise an SAM domain in the interval 911–975; that stretch reads SAVVSVGDWL…LSSVQAMRTQ (65 aa). The short motif at 984 to 986 is the PDZ-binding element; that stretch reads VPV.

This sequence belongs to the protein kinase superfamily. Tyr protein kinase family. Ephrin receptor subfamily. Heterotetramer upon binding of the ligand. The heterotetramer is composed of an ephrin dimer and a receptor dimer. Oligomerization is probably required to induce biological responses. Interacts (phosphorylated at position Tyr-602) with FYN. Interacts with CDK5, CDK5R1 and NGEF; upon activation by EFNA1 induces NGEF phosphorylation by the kinase CDK5. Interacts with CHN1; effector of EPHA4 in axon guidance linking EPHA4 activation to RAC1 regulation. Interacts (via PDZ motif) with SIPA1L1 (via PDZ domain); controls neuronal morphology through regulation of the RAP1 (RAP1A or RAP1B) and RAP2 (RAP2A, RAP2B or RAP2C) GTPases. Forms a ternary complex composed of ADAM10, CADH1 and EPHA4; within the complex, CADH1 is cleaved by ADAM10 which disrupts adherens junctions. In terms of tissue distribution, ubiquitous.

The protein resides in the cell membrane. Its subcellular location is the cell projection. It localises to the axon. The protein localises to the dendrite. It is found in the postsynaptic density membrane. The protein resides in the early endosome. Its subcellular location is the cell junction. It localises to the adherens junction. It carries out the reaction L-tyrosyl-[protein] + ATP = O-phospho-L-tyrosyl-[protein] + ADP + H(+). In terms of biological role, receptor tyrosine kinase which binds membrane-bound ephrin family ligands residing on adjacent cells, leading to contact-dependent bidirectional signaling into neighboring cells. The signaling pathway downstream of the receptor is referred to as forward signaling while the signaling pathway downstream of the ephrin ligand is referred to as reverse signaling. Highly promiscuous, it has the unique property among Eph receptors to bind and to be physiologically activated by both GPI-anchored ephrin-A and transmembrane ephrin-B ligands including EFNA1 and EFNB3. Upon activation by ephrin ligands, modulates cell morphology and integrin-dependent cell adhesion through regulation of the Rac, Rap and Rho GTPases activity. Plays an important role in the development of the nervous system controlling different steps of axonal guidance including the establishment of the corticospinal projections. May also control the segregation of motor and sensory axons during neuromuscular circuit development. In addition to its role in axonal guidance plays a role in synaptic plasticity. Activated by EFNA1 phosphorylates CDK5 at 'Tyr-15' which in turn phosphorylates NGEF regulating RHOA and dendritic spine morphogenesis. In the nervous system, also plays a role in repair after injury preventing axonal regeneration and in angiogenesis playing a role in central nervous system vascular formation. Additionally, its promiscuity makes it available to participate in a variety of cell-cell signaling regulating for instance the development of the thymic epithelium. During development of the cochlear organ of Corti, regulates pillar cell separation by forming a ternary complex with ADAM10 and CADH1 which facilitates the cleavage of CADH1 by ADAM10 and disruption of adherens junctions. Phosphorylates CAPRIN1, promoting CAPRIN1-dependent formation of a membraneless compartment. The sequence is that of Ephrin type-A receptor 4 (EPHA4) from Homo sapiens (Human).